Consider the following 249-residue polypeptide: UPF0309 protein GTNG_1302 (249 aa).

Positions 31 to 214 constitute an SIS domain; that stretch reads VSKAVQNGGI…ALMAENGVEP (184 aa).

This sequence belongs to the UPF0309 family.

This Geobacillus thermodenitrificans (strain NG80-2) protein is UPF0309 protein GTNG_1302.